Here is a 329-residue protein sequence, read N- to C-terminus: Flotillin-like protein FloA (329 aa).

The next 2 membrane-spanning stretches (helical) occupy residues 4–24 and 26–46; these read IAFI…FAIV and VGLW…TLIG.

The protein belongs to the flotillin-like FloA family. Homooligomerizes.

The protein localises to the cell membrane. It is found in the membrane raft. In terms of biological role, found in functional membrane microdomains (FMM) that may be equivalent to eukaryotic membrane rafts. FMMs are highly dynamic and increase in number as cells age. Flotillins are thought to be important factors in membrane fluidity. The chain is Flotillin-like protein FloA from Acetivibrio thermocellus (strain ATCC 27405 / DSM 1237 / JCM 9322 / NBRC 103400 / NCIMB 10682 / NRRL B-4536 / VPI 7372) (Clostridium thermocellum).